The sequence spans 475 residues: Kynureninase (475 aa).

Residues L142, T143, F170 to D173, D255, H258, and Y280 contribute to the pyridoxal 5'-phosphate site. Position 281 is an N6-(pyridoxal phosphate)lysine (K281). Positions 320 and 348 each coordinate pyridoxal 5'-phosphate.

Belongs to the kynureninase family. As to quaternary structure, homodimer. Requires pyridoxal 5'-phosphate as cofactor.

It localises to the cytoplasm. It catalyses the reaction L-kynurenine + H2O = anthranilate + L-alanine + H(+). It carries out the reaction 3-hydroxy-L-kynurenine + H2O = 3-hydroxyanthranilate + L-alanine + H(+). It participates in amino-acid degradation; L-kynurenine degradation; L-alanine and anthranilate from L-kynurenine: step 1/1. The protein operates within cofactor biosynthesis; NAD(+) biosynthesis; quinolinate from L-kynurenine: step 2/3. In terms of biological role, catalyzes the cleavage of L-kynurenine (L-Kyn) and L-3-hydroxykynurenine (L-3OHKyn) into anthranilic acid (AA) and 3-hydroxyanthranilic acid (3-OHAA), respectively. The sequence is that of Kynureninase (bna5) from Botryotinia fuckeliana (strain B05.10) (Noble rot fungus).